The chain runs to 1284 residues: Neuronal cell adhesion molecule (1284 aa).

Residues 1–24 (MMKEKSISASKASLVFFLCQMISA) form the signal peptide. Residues 25 to 1143 (LDVPLDSKLL…ASRQVDIATQ (1119 aa)) are Extracellular-facing. 6 consecutive Ig-like C2-type domains span residues 41 to 129 (PTIT…AAIS), 136 to 230 (PSRS…QPIS), 243 to 332 (PPVL…ISVT), 337 to 424 (PYWI…AFVN), 430 to 517 (PRIL…VQLE), and 521 to 608 (PTMI…AVLT). 2 disulfides stabilise this stretch: C63–C118 and C162–C213. N78 carries N-linked (GlcNAc...) asparagine glycosylation. N218 and N290 each carry an N-linked (GlcNAc...) asparagine glycan. Intrachain disulfides connect C268–C316 and C358–C408. Residues N409, N483, N576, N581, N595, and N692 are each glycosylated (N-linked (GlcNAc...) asparagine). 2 cysteine pairs are disulfide-bonded: C452-C501 and C543-C592. 5 consecutive Fibronectin type-III domains span residues 625–720 (PPLD…TKSA), 725–819 (NPSN…SGED), 824–926 (APGN…TPEG), 930–1026 (PPSF…IMDE), and 1040–1132 (QPLY…TGPA). A compositionally biased stretch (polar residues) spans 707–731 (QPSEPSEQYLTKSANPDENPSNVQG). The segment at 707 to 732 (QPSEPSEQYLTKSANPDENPSNVQGI) is disordered. 9 N-linked (GlcNAc...) asparagine glycosylation sites follow: N778, N834, N885, N969, N985, N995, N1048, N1059, and N1091. A helical transmembrane segment spans residues 1144 to 1166 (GWFIGLMCAVALLILILLIVCFI). The Cytoplasmic segment spans residues 1167–1284 (RRNKGGKYPV…SPVNAMNSFV (118 aa)). Composition is skewed to basic and acidic residues over residues 1175–1195 (PVKE…KEDD), 1202–1212 (RSLESDAEDHK), and 1221–1230 (PSDRTVKKED). The disordered stretch occupies residues 1175 to 1284 (PVKEKEDAHA…SPVNAMNSFV (110 aa)). Residues 1268–1284 (NESSEAPSPVNAMNSFV) show a composition bias toward polar residues.

It belongs to the immunoglobulin superfamily. L1/neurofascin/NgCAM family. Heterodimer of an alpha and a beta chain. Retina and developing brain.

It is found in the cell membrane. In terms of biological role, this protein is a cell adhesion molecule involved in neuron-neuron adhesion, neurite fasciculation, outgrowth of neurites, etc. Specifically involved in the development of optic fibres in the retina. This is Neuronal cell adhesion molecule from Gallus gallus (Chicken).